The primary structure comprises 71 residues: Small ribosomal subunit protein bS21 (71 aa).

The protein belongs to the bacterial ribosomal protein bS21 family.

The chain is Small ribosomal subunit protein bS21 from Buchnera aphidicola subsp. Baizongia pistaciae (strain Bp).